A 203-amino-acid polypeptide reads, in one-letter code: Guanylate kinase (203 aa).

The Guanylate kinase-like domain occupies 3-181; sequence GTLYIVAAPS…AVSEMCAIFT (179 aa). 10 to 17 is an ATP binding site; that stretch reads APSGAGKS.

It belongs to the guanylate kinase family.

The protein resides in the cytoplasm. The enzyme catalyses GMP + ATP = GDP + ADP. Its function is as follows. Essential for recycling GMP and indirectly, cGMP. This chain is Guanylate kinase, found in Xanthomonas campestris pv. campestris (strain 8004).